A 337-amino-acid polypeptide reads, in one-letter code: Heat-inducible transcription repressor HrcA (337 aa).

Belongs to the HrcA family.

In terms of biological role, negative regulator of class I heat shock genes (grpE-dnaK-dnaJ and groELS operons). Prevents heat-shock induction of these operons. The polypeptide is Heat-inducible transcription repressor HrcA (Arthrobacter sp. (strain FB24)).